Consider the following 48-residue polypeptide: Large ribosomal subunit protein bL34 (48 aa).

The protein belongs to the bacterial ribosomal protein bL34 family.

The chain is Large ribosomal subunit protein bL34 (rpmH) from Mycoplasma pneumoniae (strain ATCC 29342 / M129 / Subtype 1) (Mycoplasmoides pneumoniae).